We begin with the raw amino-acid sequence, 431 residues long: Trigger factor (431 aa).

The region spanning 158 to 243 is the PPIase FKBP-type domain; sequence GDLVAVETWS…VAEVSEPVVP (86 aa).

The protein belongs to the FKBP-type PPIase family. Tig subfamily.

It localises to the cytoplasm. The catalysed reaction is [protein]-peptidylproline (omega=180) = [protein]-peptidylproline (omega=0). Functionally, involved in protein export. Acts as a chaperone by maintaining the newly synthesized protein in an open conformation. Functions as a peptidyl-prolyl cis-trans isomerase. The polypeptide is Trigger factor (Stenotrophomonas maltophilia (strain K279a)).